The following is a 164-amino-acid chain: Large ribosomal subunit protein bL9 (164 aa).

This sequence belongs to the bacterial ribosomal protein bL9 family.

In terms of biological role, binds to the 23S rRNA. This is Large ribosomal subunit protein bL9 from Borrelia recurrentis (strain A1).